Reading from the N-terminus, the 196-residue chain is Serine/arginine-rich splicing factor RSZ22A (196 aa).

In terms of domain architecture, RRM spans 2 to 71; that stretch reads SRVYVGNLDP…NGWRVEQSHN (70 aa). S48 is modified (phosphoserine). Residues 58-70 show a composition bias toward basic and acidic residues; that stretch reads VDGKNGWRVEQSH. The disordered stretch occupies residues 58 to 196; it reads VDGKNGWRVE…GLKDVRRSRS (139 aa). Residues 72 to 87 are compositionally biased toward gly residues; it reads RGGGGGRGGGRGGGDG. Residues 88–100 are compositionally biased toward basic and acidic residues; sequence GRGRGGSDLKCYE. The CCHC-type zinc finger occupies 96–113; it reads LKCYECGESGHFARECRS. Basic residues predominate over residues 119–135; that stretch reads GRRRSRSRSRSPPRYRK. A phosphoserine mark is found at S136, S144, S146, S151, S159, S170, and S196. Residues 139 to 149 are compositionally biased toward low complexity; sequence YGGRRSYSPRA.

This sequence belongs to the splicing factor SR family. RSZ subfamily. As to quaternary structure, component of the spliceosome. Post-translationally, extensively phosphorylated on serine residues in the RS domain.

It localises to the nucleus. Its function is as follows. Probably involved in intron recognition and spliceosome assembly. The protein is Serine/arginine-rich splicing factor RSZ22A (RSZ22A) of Arabidopsis thaliana (Mouse-ear cress).